The following is a 258-amino-acid chain: Type III pantothenate kinase (258 aa).

6–13 contributes to the ATP binding site; the sequence is DVGNTNTV. Substrate-binding positions include tyrosine 100 and 107-110; that span reads GADR. Aspartate 109 serves as the catalytic Proton acceptor. Aspartate 129 contributes to the K(+) binding site. Threonine 132 contacts ATP. Residue threonine 184 coordinates substrate.

This sequence belongs to the type III pantothenate kinase family. As to quaternary structure, homodimer. NH4(+) is required as a cofactor. It depends on K(+) as a cofactor.

It localises to the cytoplasm. It catalyses the reaction (R)-pantothenate + ATP = (R)-4'-phosphopantothenate + ADP + H(+). It functions in the pathway cofactor biosynthesis; coenzyme A biosynthesis; CoA from (R)-pantothenate: step 1/5. In terms of biological role, catalyzes the phosphorylation of pantothenate (Pan), the first step in CoA biosynthesis. The polypeptide is Type III pantothenate kinase (Geobacillus thermodenitrificans (strain NG80-2)).